The sequence spans 318 residues: L-malyl-CoA/beta-methylmalyl-CoA lyase (318 aa).

The substrate site is built by phenylalanine 19, arginine 24, lysine 30, and arginine 76. The Mg(2+) site is built by glutamate 141 and aspartate 168. Residues alanine 167–aspartate 168 and isoleucine 251–histidine 252 each bind substrate.

Belongs to the HpcH/HpaI aldolase family. In terms of assembly, homohexamer. Dimer of trimers. Requires Mg(2+) as cofactor. Mn(2+) is required as a cofactor.

The enzyme catalyses (S)-malyl-CoA = glyoxylate + acetyl-CoA. It carries out the reaction (2R,3S)-beta-methylmalyl-CoA = propanoyl-CoA + glyoxylate. With respect to regulation, in vitro inhibited by EDTA. Functionally, involved in the ethylmalonyl-CoA pathway for acetate assimilation. Catalyzes the reversible condensation of glyoxylate and acetyl-CoA to L-malyl-CoA and the reversible condensation of glyoxylate and propionyl-CoA to beta-methylmalyl-CoA. This is L-malyl-CoA/beta-methylmalyl-CoA lyase from Rhodobacter capsulatus (Rhodopseudomonas capsulata).